A 120-amino-acid polypeptide reads, in one-letter code: uncharacterized protein (120 aa).

An RING-type zinc finger spans residues Cys70–Lys109.

This is an uncharacterized protein from Orgyia pseudotsugata multicapsid polyhedrosis virus (OpMNPV).